We begin with the raw amino-acid sequence, 616 residues long: Chaperone protein HscA (616 aa).

This sequence belongs to the heat shock protein 70 family.

Its function is as follows. Chaperone involved in the maturation of iron-sulfur cluster-containing proteins. Has a low intrinsic ATPase activity which is markedly stimulated by HscB. Involved in the maturation of IscU. This chain is Chaperone protein HscA, found in Escherichia coli O45:K1 (strain S88 / ExPEC).